Reading from the N-terminus, the 422-residue chain is Putative serpin-Z8 (422 aa).

An RCL region spans residues 369-393 (GTVAAAATMTRMLPSGVPPPPVDFV).

The protein belongs to the serpin family.

In terms of biological role, probable serine protease inhibitor. This is Putative serpin-Z8 from Oryza sativa subsp. japonica (Rice).